A 773-amino-acid chain; its full sequence is Cellobiose dehydrogenase (773 aa).

The N-terminal stretch at 1 to 18 (MLGRSLLALLPFVGLAFS) is a signal peptide. Gln-19 is subject to Pyrrolidone carboxylic acid. The heme domain stretch occupies residues 19–208 (QSASQFTDPT…YQNYLNGDSG (190 aa)). Heme is bound by residues Met-83 and His-181. The interval 203-227 (LNGDSGNPTTTSTKPTSTSSSVTTG) is disordered. Over residues 210 to 227 (PTTTSTKPTSTSSSVTTG) the composition is skewed to low complexity. The interval 235–773 (YDYIIVGAGP…AKILALAGGP (539 aa)) is oxidoreductase. 236 to 265 (DYIIVGAGPGGIIAADRLSEAGKKVLLLER) provides a ligand contact to FAD. His-707 (proton acceptor) is an active-site residue.

This sequence in the C-terminal section; belongs to the GMC oxidoreductase family. It depends on FAD as a cofactor. The cofactor is heme.

The protein resides in the secreted. The catalysed reaction is D-cellobiose + A = D-cellobiono-1,5-lactone + AH2. Its function is as follows. Degrades both lignin and cellulose. Oxidizes cellobiose to cellobionolactone. The chain is Cellobiose dehydrogenase (CDH-1) from Phanerodontia chrysosporium (White-rot fungus).